A 336-amino-acid polypeptide reads, in one-letter code: Acetyl-coenzyme A carboxylase carboxyl transferase subunit beta (336 aa).

One can recognise a CoA carboxyltransferase N-terminal domain in the interval 27-297; the sequence is LWTKCESCQG…VAPAPAPAAT (271 aa). 4 residues coordinate Zn(2+): Cys-31, Cys-34, Cys-50, and Cys-53. The C4-type zinc finger occupies 31-53; it reads CESCQGILYRPDLERNLEVCPKC. The segment at 287–336 is disordered; it reads SVAPAPAPAATVDPEPESAEPEAPAEEAGPAGAAGDQAGESQDEGDPRNA. Residues 300 to 311 show a composition bias toward acidic residues; that stretch reads PEPESAEPEAPA. Residues 312–326 are compositionally biased toward low complexity; sequence EEAGPAGAAGDQAGE.

This sequence belongs to the AccD/PCCB family. As to quaternary structure, acetyl-CoA carboxylase is a heterohexamer composed of biotin carboxyl carrier protein (AccB), biotin carboxylase (AccC) and two subunits each of ACCase subunit alpha (AccA) and ACCase subunit beta (AccD). Requires Zn(2+) as cofactor.

It is found in the cytoplasm. The catalysed reaction is N(6)-carboxybiotinyl-L-lysyl-[protein] + acetyl-CoA = N(6)-biotinyl-L-lysyl-[protein] + malonyl-CoA. Its pathway is lipid metabolism; malonyl-CoA biosynthesis; malonyl-CoA from acetyl-CoA: step 1/1. Component of the acetyl coenzyme A carboxylase (ACC) complex. Biotin carboxylase (BC) catalyzes the carboxylation of biotin on its carrier protein (BCCP) and then the CO(2) group is transferred by the transcarboxylase to acetyl-CoA to form malonyl-CoA. This Halorhodospira halophila (strain DSM 244 / SL1) (Ectothiorhodospira halophila (strain DSM 244 / SL1)) protein is Acetyl-coenzyme A carboxylase carboxyl transferase subunit beta.